The sequence spans 326 residues: Phospho-N-acetylmuramoyl-pentapeptide-transferase (326 aa).

9 helical membrane-spanning segments follow: residues 3 to 23 (ISIS…PAFI), 51 to 71 (TMGG…VALF), 79 to 99 (VGMI…DDFL), 115 to 135 (LALQ…GGDM), 138 to 158 (IFGY…FWLV), 169 to 189 (GIDG…GVIA), 195 to 215 (MDIL…FVFN), 221 to 243 (VFMG…MALH), and 304 to 324 (VDFF…AILY).

This sequence belongs to the glycosyltransferase 4 family. MraY subfamily. It depends on Mg(2+) as a cofactor.

The protein localises to the cell membrane. The enzyme catalyses UDP-N-acetyl-alpha-D-muramoyl-L-alanyl-gamma-D-glutamyl-L-lysyl-D-alanyl-D-alanine + di-trans,octa-cis-undecaprenyl phosphate = Mur2Ac(oyl-L-Ala-gamma-D-Glu-L-Lys-D-Ala-D-Ala)-di-trans,octa-cis-undecaprenyl diphosphate + UMP. The protein operates within cell wall biogenesis; peptidoglycan biosynthesis. Functionally, catalyzes the initial step of the lipid cycle reactions in the biosynthesis of the cell wall peptidoglycan: transfers peptidoglycan precursor phospho-MurNAc-pentapeptide from UDP-MurNAc-pentapeptide onto the lipid carrier undecaprenyl phosphate, yielding undecaprenyl-pyrophosphoryl-MurNAc-pentapeptide, known as lipid I. This Streptococcus pneumoniae (strain Hungary19A-6) protein is Phospho-N-acetylmuramoyl-pentapeptide-transferase.